Here is a 246-residue protein sequence, read N- to C-terminus: 5-oxoprolinase subunit A (246 aa).

The protein belongs to the LamB/PxpA family. As to quaternary structure, forms a complex composed of PxpA, PxpB and PxpC.

The enzyme catalyses 5-oxo-L-proline + ATP + 2 H2O = L-glutamate + ADP + phosphate + H(+). In terms of biological role, catalyzes the cleavage of 5-oxoproline to form L-glutamate coupled to the hydrolysis of ATP to ADP and inorganic phosphate. The protein is 5-oxoprolinase subunit A of Cupriavidus necator (strain ATCC 17699 / DSM 428 / KCTC 22496 / NCIMB 10442 / H16 / Stanier 337) (Ralstonia eutropha).